A 124-amino-acid chain; its full sequence is Small ribosomal subunit protein uS12 (124 aa).

3-methylthioaspartic acid is present on Asp-89.

This sequence belongs to the universal ribosomal protein uS12 family. Part of the 30S ribosomal subunit. Contacts proteins S8 and S17. May interact with IF1 in the 30S initiation complex.

With S4 and S5 plays an important role in translational accuracy. Its function is as follows. Interacts with and stabilizes bases of the 16S rRNA that are involved in tRNA selection in the A site and with the mRNA backbone. Located at the interface of the 30S and 50S subunits, it traverses the body of the 30S subunit contacting proteins on the other side and probably holding the rRNA structure together. The combined cluster of proteins S8, S12 and S17 appears to hold together the shoulder and platform of the 30S subunit. In Acinetobacter baumannii (strain AB307-0294), this protein is Small ribosomal subunit protein uS12.